We begin with the raw amino-acid sequence, 207 residues long: Uracil phosphoribosyltransferase (207 aa).

5-phospho-alpha-D-ribose 1-diphosphate-binding positions include R77, R102, and 129–137; that span reads DPMLATGGS. Residues I192 and 197-199 contribute to the uracil site; that span reads GDA. Position 198 (D198) interacts with 5-phospho-alpha-D-ribose 1-diphosphate.

Belongs to the UPRTase family. It depends on Mg(2+) as a cofactor.

It carries out the reaction UMP + diphosphate = 5-phospho-alpha-D-ribose 1-diphosphate + uracil. Its pathway is pyrimidine metabolism; UMP biosynthesis via salvage pathway; UMP from uracil: step 1/1. With respect to regulation, allosterically activated by GTP. Functionally, catalyzes the conversion of uracil and 5-phospho-alpha-D-ribose 1-diphosphate (PRPP) to UMP and diphosphate. The polypeptide is Uracil phosphoribosyltransferase (Ureaplasma parvum serovar 3 (strain ATCC 27815 / 27 / NCTC 11736)).